The following is a 266-amino-acid chain: Glutamate racemase (266 aa).

Residues Asp9–Ser10 and Tyr41–Gly42 contribute to the substrate site. Catalysis depends on Cys72, which acts as the Proton donor/acceptor. A substrate-binding site is contributed by Asn73 to Thr74. Cys184 serves as the catalytic Proton donor/acceptor. Thr185–His186 provides a ligand contact to substrate.

This sequence belongs to the aspartate/glutamate racemases family. In terms of assembly, homodimer.

It catalyses the reaction L-glutamate = D-glutamate. It functions in the pathway cell wall biogenesis; peptidoglycan biosynthesis. Provides the (R)-glutamate required for cell wall biosynthesis. This Staphylococcus aureus (strain MRSA252) protein is Glutamate racemase.